Reading from the N-terminus, the 468-residue chain is Probable citrate synthase, mitochondrial (468 aa).

Catalysis depends on residues His-303, His-349, and Asp-404.

This sequence belongs to the citrate synthase family. In terms of assembly, homodimer.

It localises to the mitochondrion matrix. It catalyses the reaction oxaloacetate + acetyl-CoA + H2O = citrate + CoA + H(+). It participates in carbohydrate metabolism; tricarboxylic acid cycle; isocitrate from oxaloacetate: step 1/2. This Caenorhabditis briggsae protein is Probable citrate synthase, mitochondrial (cts-1).